Here is a 367-residue protein sequence, read N- to C-terminus: 2-oxoisovalerate dehydrogenase subunit alpha (367 aa).

Substrate contacts are provided by residues phenylalanine 66, tyrosine 95, 128-131 (MPEH), and serine 144. 94 to 96 (YYR) lines the thiamine diphosphate pocket. Thiamine diphosphate is bound by residues 144 to 146 (SPI), 174 to 180 (GDGATSE), 204 to 208 (NFYAI), and histidine 273. Mg(2+) contacts are provided by aspartate 175, asparagine 204, and tyrosine 206.

It belongs to the BCKDHA family. Heterotetramer of two alpha and two beta chains. Directly associated with ODBB in the E1 complex. Requires thiamine diphosphate as cofactor.

It carries out the reaction N(6)-[(R)-lipoyl]-L-lysyl-[protein] + 3-methyl-2-oxobutanoate + H(+) = N(6)-[(R)-S(8)-2-methylpropanoyldihydrolipoyl]-L-lysyl-[protein] + CO2. In terms of biological role, the branched-chain alpha-keto dehydrogenase complex catalyzes the overall conversion of alpha-keto acids to acyl-CoA and CO(2). It contains multiple copies of three enzymatic components: branched-chain alpha-keto acid decarboxylase (E1), lipoamide acyltransferase (E2) and lipoamide dehydrogenase (E3). The sequence is that of 2-oxoisovalerate dehydrogenase subunit alpha from Thermus thermophilus (strain ATCC BAA-163 / DSM 7039 / HB27).